The following is a 116-amino-acid chain: uncharacterized protein (116 aa).

This is an uncharacterized protein from Archaeoglobus fulgidus (strain ATCC 49558 / DSM 4304 / JCM 9628 / NBRC 100126 / VC-16).